The following is a 99-amino-acid chain: Mu-hexatoxin-Mg1c (99 aa).

3 disulfides stabilise this stretch: Cys61–Cys75, Cys68–Cys80, and Cys74–Cys94.

The protein belongs to the neurotoxin 14 (magi-1) family. 09 (magi-1) subfamily. Expressed by the venom gland.

It is found in the secreted. In terms of biological role, inhibits voltage-gated sodium channels by binding to site 3. Insecticidal neurotoxin. In Macrothele gigas (Japanese funnel web spider), this protein is Mu-hexatoxin-Mg1c.